Here is a 286-residue protein sequence, read N- to C-terminus: Expansin-B4 (286 aa).

An N-terminal signal peptide occupies residues 1 to 24 (MGSLSSLAAAAVFLSLLAVGHCAA). N-linked (GlcNAc...) asparagine glycans are attached at residues Asn-28 and Asn-44. Positions 75-181 (GGACGFKHTN…TRVPCEFPGL (107 aa)) constitute an Expansin-like EG45 domain. Cystine bridges form between Cys-78–Cys-106, Cys-109–Cys-176, and Cys-114–Cys-120. The region spanning 194-281 (VYFAVLVEYE…NWRPNTFYRS (88 aa)) is the Expansin-like CBD domain. N-linked (GlcNAc...) asparagine glycosylation occurs at Asn-257.

It belongs to the expansin family. Expansin B subfamily. As to expression, expressed in internodes.

The protein localises to the secreted. It is found in the cell wall. The protein resides in the membrane. Functionally, may cause loosening and extension of plant cell walls by disrupting non-covalent bonding between cellulose microfibrils and matrix glucans. No enzymatic activity has been found. May be required for rapid internodal elongation in deepwater rice during submergence. This Oryza sativa subsp. japonica (Rice) protein is Expansin-B4 (EXPB4).